Here is a 43-residue protein sequence, read N- to C-terminus: Large ribosomal subunit protein uL11 (43 aa).

It belongs to the universal ribosomal protein uL11 family. As to quaternary structure, part of the ribosomal stalk of the 50S ribosomal subunit. Interacts with L10 and the large rRNA to form the base of the stalk. L10 forms an elongated spine to which L12 dimers bind in a sequential fashion forming a multimeric L10(L12)X complex. Post-translationally, one or more lysine residues are methylated.

Forms part of the ribosomal stalk which helps the ribosome interact with GTP-bound translation factors. In Streptomyces galbus, this protein is Large ribosomal subunit protein uL11 (rplK).